We begin with the raw amino-acid sequence, 119 residues long: Large ribosomal subunit protein uL18 (119 aa).

It belongs to the universal ribosomal protein uL18 family. Part of the 50S ribosomal subunit; part of the 5S rRNA/L5/L18/L25 subcomplex. Contacts the 5S and 23S rRNAs.

In terms of biological role, this is one of the proteins that bind and probably mediate the attachment of the 5S RNA into the large ribosomal subunit, where it forms part of the central protuberance. The chain is Large ribosomal subunit protein uL18 from Nitrosomonas europaea (strain ATCC 19718 / CIP 103999 / KCTC 2705 / NBRC 14298).